A 274-amino-acid chain; its full sequence is NADPH-dependent 7-cyano-7-deazaguanine reductase (274 aa).

80–82 (VES) serves as a coordination point for substrate. Position 82–83 (82–83 (SK)) interacts with NADPH. Catalysis depends on C181, which acts as the Thioimide intermediate. D188 functions as the Proton donor in the catalytic mechanism. A substrate-binding site is contributed by 220–221 (HE). 249–250 (RG) serves as a coordination point for NADPH.

It belongs to the GTP cyclohydrolase I family. QueF type 2 subfamily. As to quaternary structure, homodimer.

The protein resides in the cytoplasm. The enzyme catalyses 7-aminomethyl-7-carbaguanine + 2 NADP(+) = 7-cyano-7-deazaguanine + 2 NADPH + 3 H(+). The protein operates within tRNA modification; tRNA-queuosine biosynthesis. Its function is as follows. Catalyzes the NADPH-dependent reduction of 7-cyano-7-deazaguanine (preQ0) to 7-aminomethyl-7-deazaguanine (preQ1). The protein is NADPH-dependent 7-cyano-7-deazaguanine reductase of Burkholderia ambifaria (strain MC40-6).